The primary structure comprises 468 residues: Glutamate--tRNA ligase 2 (468 aa).

The 'HIGH' region signature appears at 11–21 (PSPTGFLHIGG). The 'KMSKS' region signature appears at 239–243 (KLSKR). Residue Lys242 participates in ATP binding.

Belongs to the class-I aminoacyl-tRNA synthetase family. Glutamate--tRNA ligase type 1 subfamily. In terms of assembly, monomer.

The protein localises to the cytoplasm. It carries out the reaction tRNA(Glu) + L-glutamate + ATP = L-glutamyl-tRNA(Glu) + AMP + diphosphate. Its function is as follows. Catalyzes the attachment of glutamate to tRNA(Glu) in a two-step reaction: glutamate is first activated by ATP to form Glu-AMP and then transferred to the acceptor end of tRNA(Glu). In Ruegeria pomeroyi (strain ATCC 700808 / DSM 15171 / DSS-3) (Silicibacter pomeroyi), this protein is Glutamate--tRNA ligase 2.